Consider the following 260-residue polypeptide: Putative nudix hydrolase 6 (260 aa).

The region spanning 113 to 257 (PNHAADPIVS…SHFIDLLKES (145 aa)) is the Nudix hydrolase domain. Positions 148–170 (GMVDAGEHVSQTLRREFAEEAMH) match the Nudix box motif. Residues Glu-163 and Glu-167 each contribute to the Mg(2+) site.

Belongs to the Nudix hydrolase family. It depends on Mg(2+) as a cofactor. Mn(2+) is required as a cofactor.

Its function is as follows. Probably mediates the hydrolysis of some nucleoside diphosphate derivatives. In Caenorhabditis elegans, this protein is Putative nudix hydrolase 6 (ndx-6).